The sequence spans 287 residues: uncharacterized protein (287 aa).

Disordered regions lie at residues 109 to 175 (QEES…SSQD), 203 to 223 (IPPP…SQPV), and 257 to 287 (KESE…SSEE). A compositionally biased stretch (low complexity) spans 110-136 (EESSSSLEEGIIEDPVVATPSPASAAP). Positions 143–152 (RKEFKNEKWK) are enriched in basic and acidic residues. Positions 153–162 (EKKKQGRRRN) are enriched in basic residues. Residues 273-287 (SLEEASVHDRISSEE) show a composition bias toward basic and acidic residues.

The protein belongs to the chlamydial CPn_0623/CT_504/TC_0791 family.

This is an uncharacterized protein from Chlamydia muridarum (strain MoPn / Nigg).